Reading from the N-terminus, the 268-residue chain is Interleukin-1 alpha (268 aa).

Residues 1-112 (MAKVPDLFED…NTEEEIIKPR (112 aa)) constitute a propeptide that is removed on maturation. The residue at position 82 (lysine 82) is an N6-acetyllysine. Positions 82–86 (KKRRL) are nuclear localization signal (NLS). Serine 87 carries the phosphoserine modification. N-linked (GlcNAc...) asparagine glycosylation is found at asparagine 102 and asparagine 141.

This sequence belongs to the IL-1 family. Monomer. Interacts with TMED10; the interaction mediates the translocation from the cytoplasm into the ERGIC (endoplasmic reticulum-Golgi intermediate compartment) and thereby secretion. Interacts with IL1R1. Interacts with S100A13; this interaction is the first step in the export of IL1A, followed by direct translocation of this complex across the plasma membrane. In terms of processing, acetylated within its nuclear localization sequence, which impacts subcellular localization. Post-translationally, proteolytic processed by CAPN1 in a calcium-dependent manner. Cleavage from 31 kDa precursor to 18 kDa biologically active molecules. Phosphorylated. Phosphorylation greatly enhances susceptibility to digestion and promotes the conversion of pre-IL1A alpha to the biologically active IL1A.

Its subcellular location is the nucleus. The protein resides in the cytoplasm. The protein localises to the secreted. Functionally, cytokine constitutively present intracellularly in nearly all resting non-hematopoietic cells that plays an important role in inflammation and bridges the innate and adaptive immune systems. After binding to its receptor IL1R1 together with its accessory protein IL1RAP, forms the high affinity interleukin-1 receptor complex. Signaling involves the recruitment of adapter molecules such as MYD88, IRAK1 or IRAK4. In turn, mediates the activation of NF-kappa-B and the three MAPK pathways p38, p42/p44 and JNK pathways. Within the cell, acts as an alarmin and cell death results in its liberation in the extracellular space after disruption of the cell membrane to induce inflammation and alert the host to injury or damage. In addition to its role as a danger signal, which occurs when the cytokine is passively released by cell necrosis, directly senses DNA damage and acts as signal for genotoxic stress without loss of cell integrity. The protein is Interleukin-1 alpha (IL1A) of Bos taurus (Bovine).